The chain runs to 252 residues: uncharacterized protein (252 aa).

Positions 1–22 are cleaved as a signal peptide; it reads MIHSKRLRLWLYLVLLAVFISA. C23 carries N-palmitoyl cysteine lipidation. A lipid anchor (S-diacylglycerol cysteine) is attached at C23.

The protein belongs to the staphylococcal tandem lipoprotein family.

The protein resides in the cell membrane. This is an uncharacterized protein from Staphylococcus aureus (strain MW2).